We begin with the raw amino-acid sequence, 411 residues long: Mannan endo-1,4-beta-mannosidase 1 (411 aa).

The N-terminal stretch at 1 to 17 (MLNILPFFLFFLPFLIG) is a signal peptide. N33 carries an N-linked (GlcNAc...) asparagine glycan. 2 residues coordinate substrate: W87 and N197. E198 functions as the Proton donor in the catalytic mechanism. N202 is a glycosylation site (N-linked (GlcNAc...) asparagine). Y277 is a substrate binding site. Catalysis depends on E319, which acts as the Nucleophile. Position 361 (W361) interacts with substrate. N-linked (GlcNAc...) asparagine glycans are attached at residues N366 and N384.

The protein belongs to the glycosyl hydrolase 5 (cellulase A) family. As to expression, expressed in roots, stems and flowers.

It is found in the secreted. It carries out the reaction Random hydrolysis of (1-&gt;4)-beta-D-mannosidic linkages in mannans, galactomannans and glucomannans.. This chain is Mannan endo-1,4-beta-mannosidase 1 (MAN1), found in Arabidopsis thaliana (Mouse-ear cress).